The sequence spans 210 residues: Ribosomal RNA large subunit methyltransferase E (210 aa).

5 residues coordinate S-adenosyl-L-methionine: G61, W63, D81, D97, and D122. The active-site Proton acceptor is K162.

It belongs to the class I-like SAM-binding methyltransferase superfamily. RNA methyltransferase RlmE family.

The protein resides in the cytoplasm. The enzyme catalyses uridine(2552) in 23S rRNA + S-adenosyl-L-methionine = 2'-O-methyluridine(2552) in 23S rRNA + S-adenosyl-L-homocysteine + H(+). Specifically methylates the uridine in position 2552 of 23S rRNA at the 2'-O position of the ribose in the fully assembled 50S ribosomal subunit. In Xanthomonas oryzae pv. oryzae (strain MAFF 311018), this protein is Ribosomal RNA large subunit methyltransferase E.